Here is a 260-residue protein sequence, read N- to C-terminus: MSRREDGRLDDELRPVRITRGFTSHPAGSVLVEFGETRVMCTASVTEGVPRWRKGTGQGWLTAEYAMLPAATHDRSDRESVKGRVGGRTQEISRLIGRSLRACIDLNALGENTIAIDCDVLQADGGTRTAAITGAYVALADAVTYLAAAEKLSDPRPLSCAIAAVSVGVVDGRVRVDLPYSEDSRAEVDMNVVATDTGTLVEIQGTGEGATFPRSTLDKLLDLALASCDQLFVVQREALDAPYPGALPEPTSPPKKAFGS.

Phosphate is bound by residues arginine 88 and 126–128 (GTR).

The protein belongs to the RNase PH family. Homohexameric ring arranged as a trimer of dimers.

The catalysed reaction is tRNA(n+1) + phosphate = tRNA(n) + a ribonucleoside 5'-diphosphate. Its function is as follows. Phosphorolytic 3'-5' exoribonuclease that plays an important role in tRNA 3'-end maturation. Removes nucleotide residues following the 3'-CCA terminus of tRNAs; can also add nucleotides to the ends of RNA molecules by using nucleoside diphosphates as substrates, but this may not be physiologically important. Probably plays a role in initiation of 16S rRNA degradation (leading to ribosome degradation) during starvation. This chain is Ribonuclease PH, found in Mycobacterium sp. (strain JLS).